Here is a 143-residue protein sequence, read N- to C-terminus: Large-conductance mechanosensitive channel (143 aa).

A run of 2 helical transmembrane segments spans residues Phe-10 to Ser-30 and Gly-89 to Val-109.

This sequence belongs to the MscL family. As to quaternary structure, homopentamer.

It localises to the cell inner membrane. In terms of biological role, channel that opens in response to stretch forces in the membrane lipid bilayer. May participate in the regulation of osmotic pressure changes within the cell. This chain is Large-conductance mechanosensitive channel, found in Burkholderia cenocepacia (strain HI2424).